We begin with the raw amino-acid sequence, 378 residues long: Probable cytochrome oxidase subunit 2 (378 aa).

Residues 1 to 8 (MIDYEFLR) are Cytoplasmic-facing. A helical transmembrane segment spans residues 9 to 28 (FIWWVLVIVLLIGFSVTDGF). The Periplasmic segment spans residues 29 to 79 (DMGVTALLPVIGKKEVERRIMINTIAPHWDGNQVWLLTAGGAIFAAWPIVY). The helical transmembrane segment at 80–99 (AVSFSGFYIALVLVLAALFL) threads the bilayer. Residues 100–122 (RPLGFEYRAKIDNPTWRSVWDWG) are Cytoplasmic-facing. A helical transmembrane segment spans residues 123–142 (LFAGGFVPALVFGVAFGNLL). Over 143 to 164 (QGVPFHFNELTQVTYTGSFFEL) the chain is Periplasmic. Residues 165 to 184 (LNPFALLCGVISLSMLVTHG) form a helical membrane-spanning segment. Residues 185 to 205 (ANWLQMKTTEALRDRARTVSQ) are Cytoplasmic-facing. Residues 206–224 (IGSIVTLIAFVLAGVWLYS) traverse the membrane as a helical segment. Over 225 to 261 (KDGYVVTSTIDHFAPSSPMNKEVAVETGAWFRNFNEM) the chain is Periplasmic. Residues 262 to 281 (PILWIFPALAVVAALLNAAF) traverse the membrane as a helical segment. At 282–291 (SKANRCGFAF) the chain is on the cytoplasmic side. Residues 292–311 (FFSALTMAGVIITAAVSMFP) traverse the membrane as a helical segment. At 312–335 (FVMPSSSHPEQSLLMWDSTSSELT) the chain is on the periplasmic side. Residues 336–355 (LTLMLIFAVVFVVIALAYTI) traverse the membrane as a helical segment. The Cytoplasmic portion of the chain corresponds to 356-378 (WSYSKMFGRLDANFIDKNKHSLY).

It belongs to the cytochrome ubiquinol oxidase subunit 2 family. In terms of assembly, heterodimer of subunits I and II.

It is found in the cell inner membrane. Probable cytochrome oxidase subunit. The chain is Probable cytochrome oxidase subunit 2 from Haemophilus influenzae (strain ATCC 51907 / DSM 11121 / KW20 / Rd).